Consider the following 336-residue polypeptide: DNA-directed RNA polymerase subunit alpha (336 aa).

An alpha N-terminal domain (alpha-NTD) region spans residues 1–226 (MLIAQRPTLS…ELFGLARELN (226 aa)). The interval 241 to 336 (AALAADMALP…DDAAFSDDEL (96 aa)) is alpha C-terminal domain (alpha-CTD).

The protein belongs to the RNA polymerase alpha chain family. As to quaternary structure, homodimer. The RNAP catalytic core consists of 2 alpha, 1 beta, 1 beta' and 1 omega subunit. When a sigma factor is associated with the core the holoenzyme is formed, which can initiate transcription.

The catalysed reaction is RNA(n) + a ribonucleoside 5'-triphosphate = RNA(n+1) + diphosphate. DNA-dependent RNA polymerase catalyzes the transcription of DNA into RNA using the four ribonucleoside triphosphates as substrates. The polypeptide is DNA-directed RNA polymerase subunit alpha (Paenarthrobacter aurescens (strain TC1)).